The chain runs to 303 residues: UPF0282 protein PAE3680 (303 aa).

This sequence belongs to the UPF0282 family.

The polypeptide is UPF0282 protein PAE3680 (Pyrobaculum aerophilum (strain ATCC 51768 / DSM 7523 / JCM 9630 / CIP 104966 / NBRC 100827 / IM2)).